A 217-amino-acid chain; its full sequence is Adenylate kinase (217 aa).

10–15 (GAGKGT) contacts ATP. An NMP region spans residues 30 to 59 (STGDMLRAAVKAGSPLGVKVKDIMASGQLV). Residues Thr31, Arg36, 57-59 (QLV), 85-88 (GFPR), and Gln92 each bind AMP. Residues 122-159 (GRRVHEASGRIYHVTHNPPKTEGVDDITGEPLVQRDDD) form an LID region. Residues Arg123 and 132-133 (IY) contribute to the ATP site. AMP-binding residues include Arg156 and Arg167. ATP is bound at residue Gly202.

Belongs to the adenylate kinase family. Monomer.

The protein localises to the cytoplasm. The catalysed reaction is AMP + ATP = 2 ADP. Its pathway is purine metabolism; AMP biosynthesis via salvage pathway; AMP from ADP: step 1/1. Its function is as follows. Catalyzes the reversible transfer of the terminal phosphate group between ATP and AMP. Plays an important role in cellular energy homeostasis and in adenine nucleotide metabolism. In Teredinibacter turnerae (strain ATCC 39867 / T7901), this protein is Adenylate kinase.